A 509-amino-acid chain; its full sequence is Acetyl-coenzyme A carboxylase carboxyl transferase subunit beta, chloroplastic (509 aa).

The tract at residues 164–216 (HGSVCDGESHNSSEGESSSRRTHTKGVDLTIRESSNENERESSNENERKSSND) is disordered. Basic and acidic residues-rich tracts occupy residues 170–182 (GESH…ESSS) and 193–216 (TIRE…SSND). Positions 226 to 509 (LWLQCENCYG…LNQNSNQVEC (284 aa)) constitute a CoA carboxyltransferase N-terminal domain. Residues C230, C233, C249, and C252 each coordinate Zn(2+). The C4-type zinc finger occupies 230-252 (CENCYGLNYKKFLKSKMNICEQC). Residues 288 to 307 (FDSEGEQEQEQEQEQEEEET) are disordered.

It belongs to the AccD/PCCB family. Acetyl-CoA carboxylase is a heterohexamer composed of biotin carboxyl carrier protein, biotin carboxylase and 2 subunits each of ACCase subunit alpha and ACCase plastid-coded subunit beta (accD). The cofactor is Zn(2+).

It is found in the plastid. Its subcellular location is the chloroplast stroma. The enzyme catalyses N(6)-carboxybiotinyl-L-lysyl-[protein] + acetyl-CoA = N(6)-biotinyl-L-lysyl-[protein] + malonyl-CoA. Its pathway is lipid metabolism; malonyl-CoA biosynthesis; malonyl-CoA from acetyl-CoA: step 1/1. Component of the acetyl coenzyme A carboxylase (ACC) complex. Biotin carboxylase (BC) catalyzes the carboxylation of biotin on its carrier protein (BCCP) and then the CO(2) group is transferred by the transcarboxylase to acetyl-CoA to form malonyl-CoA. The sequence is that of Acetyl-coenzyme A carboxylase carboxyl transferase subunit beta, chloroplastic from Ipomoea purpurea (Common morning glory).